Here is a 710-residue protein sequence, read N- to C-terminus: Integrator complex subunit 10 (710 aa).

Residues serine 231, serine 381, and serine 382 each carry the phosphoserine modification. Lysine 464 participates in a covalent cross-link: Glycyl lysine isopeptide (Lys-Gly) (interchain with G-Cter in SUMO2).

This sequence belongs to the Integrator subunit 10 family. Component of the Integrator complex, composed of core subunits INTS1, INTS2, INTS3, INTS4, INTS5, INTS6, INTS7, INTS8, INTS9/RC74, INTS10, INTS11/CPSF3L, INTS12, INTS13, INTS14 and INTS15. The core complex associates with protein phosphatase 2A subunits PPP2CA and PPP2R1A, to form the Integrator-PP2A (INTAC) complex. INTS10 is part of the tail subcomplex, composed of INTS10, INTS13, INTS14 and INTS15.

The protein resides in the nucleus. Its function is as follows. Component of the integrator complex, a multiprotein complex that terminates RNA polymerase II (Pol II) transcription in the promoter-proximal region of genes. The integrator complex provides a quality checkpoint during transcription elongation by driving premature transcription termination of transcripts that are unfavorably configured for transcriptional elongation: the complex terminates transcription by (1) catalyzing dephosphorylation of the C-terminal domain (CTD) of Pol II subunit POLR2A/RPB1 and SUPT5H/SPT5, (2) degrading the exiting nascent RNA transcript via endonuclease activity and (3) promoting the release of Pol II from bound DNA. The integrator complex is also involved in terminating the synthesis of non-coding Pol II transcripts, such as enhancer RNAs (eRNAs), small nuclear RNAs (snRNAs), telomerase RNAs and long non-coding RNAs (lncRNAs). Within the integrator complex, INTS10 is part of the integrator tail module that acts as a platform for the recruitment of transcription factors at promoters. May be not involved in the recruitment of cytoplasmic dynein to the nuclear envelope, probably as component of the integrator complex. The chain is Integrator complex subunit 10 from Homo sapiens (Human).